A 916-amino-acid chain; its full sequence is Inter-alpha-trypsin inhibitor heavy chain H4 (916 aa).

The first 27 residues, 1-27, serve as a signal peptide directing secretion; the sequence is MKTPAPGRIHSIVLVLLSLAVLQTSKA. Residues 28–149 enclose the VIT domain; it reads QKVQNDIDIY…KVTFELVYEE (122 aa). Residues asparagine 82 and asparagine 208 are each glycosylated (N-linked (GlcNAc...) asparagine). The VWFA domain occupies 275–458; the sequence is NVIFVIDKSG…LQLQDFYQEV (184 aa). The N-linked (GlcNAc...) asparagine glycan is linked to asparagine 518. 2 disordered regions span residues 597 to 616 and 678 to 701; these read PEGQ…ESRG and PLAP…TDFR. Residues 678–689 are compositionally biased toward low complexity; the sequence is PLAPASAPSPTS. O-linked (GalNAc...) serine glycosylation is present at serine 683. O-linked (GalNAc...) threonine glycans are attached at residues threonine 705, threonine 706, and threonine 708. Cysteine 733 and cysteine 911 are joined by a disulfide.

This sequence belongs to the ITIH family. As to quaternary structure, interacts (via C-terminus) with DNAJC1 (via SANT 2 domain). In terms of processing, appears to be both N- and O-glycosylated.

The protein localises to the secreted. In terms of biological role, type II acute-phase protein (APP) involved in inflammatory responses to trauma. May also play a role in liver development or regeneration. The chain is Inter-alpha-trypsin inhibitor heavy chain H4 (ITIH4) from Bos taurus (Bovine).